A 293-amino-acid chain; its full sequence is MNKWLITSGVMLSLLSANSYAVMGKRYVATPQQSQWEMVVNTPLECQLVHPIPSFGDAVFSSRASKKINLDFELKMRRPMGETRNVSLISMPPPWRPGEHADRITNLKFFKQFDGYVGGQTAWGILSELEKGRYPTFSYQDWQSRDQRIEVALSSVLFQSKYNAFSDCIANLLKYSFEDIAFTILHYERQGDQLTKASKKRLAQIADYVRHNQDIDLVLVATYTDSTDGKSESQSLSERRAESLRTYFESLGLPEDRIQVQGYGKRRPIADNGTPIGKDKNRRVVISLGRTQV.

A signal peptide spans 1–21 (MNKWLITSGVMLSLLSANSYA). The OmpA-like domain occupies 175–292 (YSFEDIAFTI…RVVISLGRTQ (118 aa)).

It localises to the cell membrane. In terms of biological role, may play the role of a stator in the sodium flagellar motor, stabilizing the force-generating unit through direct interaction with the cell wall. The sequence is that of Sodium-type flagellar protein MotY from Vibrio parahaemolyticus serotype O3:K6 (strain RIMD 2210633).